The following is a 256-amino-acid chain: C-8 sterol isomerase (256 aa).

The interval Met-1–Arg-31 is disordered. A compositionally biased stretch (low complexity) spans Ser-7–Cys-30. The chain crosses the membrane as a helical span at residues Ile-40–Val-60.

Belongs to the ERG2 family.

The protein localises to the endoplasmic reticulum membrane. It functions in the pathway steroid metabolism; ergosterol biosynthesis; ergosterol from zymosterol: step 2/5. Functionally, catalyzes the reaction which results in unsaturation at C-7 in the B ring of sterols. In Neurospora crassa (strain ATCC 24698 / 74-OR23-1A / CBS 708.71 / DSM 1257 / FGSC 987), this protein is C-8 sterol isomerase (erg-1).